A 32-amino-acid polypeptide reads, in one-letter code: Ranatuerin-2La (32 aa).

Residues Cys-27 and Cys-32 are joined by a disulfide bond.

In terms of tissue distribution, expressed by the skin glands.

Its subcellular location is the secreted. Its function is as follows. Antibacterial activity against Gram-positive bacterium S.aureus and Gram-negative bacterium E.coli. Weak activity against C.albicans. The chain is Ranatuerin-2La from Rana luteiventris (Columbia spotted frog).